The following is a 471-amino-acid chain: Argininosuccinate lyase (471 aa).

This sequence belongs to the lyase 1 family. Argininosuccinate lyase subfamily.

The protein resides in the cytoplasm. The enzyme catalyses 2-(N(omega)-L-arginino)succinate = fumarate + L-arginine. Its pathway is amino-acid biosynthesis; L-arginine biosynthesis; L-arginine from L-ornithine and carbamoyl phosphate: step 3/3. The sequence is that of Argininosuccinate lyase from Ralstonia pickettii (strain 12J).